Here is a 556-residue protein sequence, read N- to C-terminus: DNA ligase B (556 aa).

Lysine 126 serves as the catalytic N6-AMP-lysine intermediate.

Belongs to the NAD-dependent DNA ligase family. LigB subfamily.

It catalyses the reaction NAD(+) + (deoxyribonucleotide)n-3'-hydroxyl + 5'-phospho-(deoxyribonucleotide)m = (deoxyribonucleotide)n+m + AMP + beta-nicotinamide D-nucleotide.. Its function is as follows. Catalyzes the formation of phosphodiester linkages between 5'-phosphoryl and 3'-hydroxyl groups in double-stranded DNA using NAD as a coenzyme and as the energy source for the reaction. This chain is DNA ligase B, found in Stutzerimonas stutzeri (strain A1501) (Pseudomonas stutzeri).